The chain runs to 308 residues: uncharacterized protein (308 aa).

10 consecutive transmembrane segments (helical) span residues 6-26, 31-51, 63-83, 100-120, 128-148, 162-182, 195-215, 221-241, 257-277, and 287-307; these read VVLI…FGIL, AKIL…FLTI, FLKL…LAYL, ILVS…LGMF, AIFC…YVGI, MAKF…FFGF, LNYL…LSLS, FGVF…PATA, VLLV…GTLY, and SIFI…WILL.

The protein belongs to the auxin efflux carrier (TC 2.A.69) family.

The protein resides in the cell membrane. This is an uncharacterized protein from Methanocaldococcus jannaschii (strain ATCC 43067 / DSM 2661 / JAL-1 / JCM 10045 / NBRC 100440) (Methanococcus jannaschii).